Here is a 371-residue protein sequence, read N- to C-terminus: Chorismate synthase (371 aa).

Residues Arg-48 and Arg-54 each contribute to the NADP(+) site. Residues 125–127 (RSS), 238–239 (NA), Gly-278, 293–297 (KPTSS), and Arg-319 contribute to the FMN site.

The protein belongs to the chorismate synthase family. Homotetramer. FMNH2 is required as a cofactor.

It carries out the reaction 5-O-(1-carboxyvinyl)-3-phosphoshikimate = chorismate + phosphate. It functions in the pathway metabolic intermediate biosynthesis; chorismate biosynthesis; chorismate from D-erythrose 4-phosphate and phosphoenolpyruvate: step 7/7. Functionally, catalyzes the anti-1,4-elimination of the C-3 phosphate and the C-6 proR hydrogen from 5-enolpyruvylshikimate-3-phosphate (EPSP) to yield chorismate, which is the branch point compound that serves as the starting substrate for the three terminal pathways of aromatic amino acid biosynthesis. This reaction introduces a second double bond into the aromatic ring system. This Saccharophagus degradans (strain 2-40 / ATCC 43961 / DSM 17024) protein is Chorismate synthase.